A 1044-amino-acid polypeptide reads, in one-letter code: Multiple epidermal growth factor-like domains protein 11 (1044 aa).

An N-terminal signal peptide occupies residues 1 to 19 (MVLSLTGLIAFSFLQATLA). Residues 20-848 (LNPEDPNVCS…SPALGAERHS (829 aa)) lie on the Extracellular side of the membrane. Residues 24-101 (DPNVCSHWES…YYESGDFCIP (78 aa)) enclose the EMI domain. 14 disulfide bridges follow: cysteine 28/cysteine 89, cysteine 54/cysteine 63, cysteine 88/cysteine 99, cysteine 103/cysteine 118, cysteine 120/cysteine 129, cysteine 146/cysteine 154, cysteine 148/cysteine 161, cysteine 163/cysteine 172, cysteine 185/cysteine 197, cysteine 191/cysteine 204, cysteine 206/cysteine 215, cysteine 228/cysteine 240, cysteine 234/cysteine 247, and cysteine 249/cysteine 258. EGF-like domains follow at residues 95-130 (SGDF…PDCS), 143-173 (SNRC…WRCE), 181-216 (HGKG…VYCE), 224-259 (HGAH…AVCA), 267-302 (FGQN…DRCQ), 310-345 (FGFQ…PRCQ), 399-434 (YGDG…EVCA), 442-477 (YGPN…LDCT), and 490-520 (NESC…DTCE). N-linked (GlcNAc...) asparagine glycosylation is present at asparagine 270. Disulfide bonds link cysteine 271–cysteine 283, cysteine 277–cysteine 290, cysteine 292–cysteine 301, cysteine 314–cysteine 326, cysteine 320–cysteine 333, cysteine 335–cysteine 344, cysteine 403–cysteine 415, cysteine 409–cysteine 422, cysteine 424–cysteine 433, cysteine 446–cysteine 458, cysteine 452–cysteine 465, cysteine 467–cysteine 476, cysteine 493–cysteine 501, cysteine 495–cysteine 508, and cysteine 510–cysteine 519. The N-linked (GlcNAc...) asparagine glycan is linked to asparagine 531. EGF-like domains follow at residues 571 to 606 (WGPN…PLCQ), 659 to 694 (FGQD…KDCS), 707 to 737 (FHAC…LFCT), 750 to 780 (GRVC…QHCE), and 788 to 823 (FGYG…IRCD). Disulfide bonds link cysteine 575–cysteine 587, cysteine 581–cysteine 594, cysteine 596–cysteine 605, cysteine 663–cysteine 675, cysteine 669–cysteine 682, cysteine 684–cysteine 693, cysteine 710–cysteine 718, cysteine 712–cysteine 725, cysteine 727–cysteine 736, cysteine 753–cysteine 761, cysteine 755–cysteine 768, cysteine 770–cysteine 779, cysteine 792–cysteine 804, cysteine 798–cysteine 811, and cysteine 813–cysteine 822. A helical membrane pass occupies residues 849–869 (VGAVTGIMLLLFLIVVLLGLF). Residues 870 to 1044 (AWHRRRQKEK…ANGPSQDKQS (175 aa)) lie on the Cytoplasmic side of the membrane. The segment at 1023-1044 (GHYDLLPVRQSPANGPSQDKQS) is disordered. Over residues 1033 to 1044 (SPANGPSQDKQS) the composition is skewed to polar residues.

This sequence belongs to the MEGF family. As to quaternary structure, homomer. Does not interact with MEGF10.

It is found in the cell membrane. The protein localises to the basolateral cell membrane. Its function is as follows. May regulate the mosaic spacing of specific neuron subtypes in the retina through homotypic retinal neuron repulsion. Mosaics provide a mechanism to distribute each cell type evenly across the retina, ensuring that all parts of the visual field have access to a full set of processing elements. In Homo sapiens (Human), this protein is Multiple epidermal growth factor-like domains protein 11 (MEGF11).